Consider the following 217-residue polypeptide: 3,4-dihydroxy-2-butanone 4-phosphate synthase (217 aa).

D-ribulose 5-phosphate contacts are provided by residues 37–38 (RE), Asp-42, 150–154 (RRGHT), and Glu-174. Residue Glu-38 participates in Mg(2+) binding. Residue His-153 coordinates Mg(2+).

It belongs to the DHBP synthase family. In terms of assembly, homodimer. Mg(2+) is required as a cofactor. Requires Mn(2+) as cofactor.

The enzyme catalyses D-ribulose 5-phosphate = (2S)-2-hydroxy-3-oxobutyl phosphate + formate + H(+). Its pathway is cofactor biosynthesis; riboflavin biosynthesis; 2-hydroxy-3-oxobutyl phosphate from D-ribulose 5-phosphate: step 1/1. Its function is as follows. Catalyzes the conversion of D-ribulose 5-phosphate to formate and 3,4-dihydroxy-2-butanone 4-phosphate. The chain is 3,4-dihydroxy-2-butanone 4-phosphate synthase from Yersinia enterocolitica serotype O:8 / biotype 1B (strain NCTC 13174 / 8081).